Reading from the N-terminus, the 133-residue chain is MLFGIRILVNTPSPLVTGLHHYNPSIHRDQGECANQWRKGPGSAHLAGLAGRCSLINTPSPLVTGLQRYNPSMDRAQGMCASLEEEAGLCKPLWAWWELQSHKHSQTSHHRAAGLQSQHAPGSGRVRITGGKV.

Residues Thr107–Val133 are disordered.

This is an uncharacterized protein from Homo sapiens (Human).